The primary structure comprises 329 residues: Serpentine receptor class alpha-7 (329 aa).

Transmembrane regions (helical) follow at residues 25-45, 57-77, 104-124, 143-163, 187-207, 237-257, and 273-293; these read YVYL…VKIV, ILLF…LFSA, YLKV…GLLL, VGIA…KIII, RLFA…SVLL, TICF…FGIF, and FIVV…ILLV.

The protein belongs to the nematode receptor-like protein sra family.

It localises to the membrane. This is Serpentine receptor class alpha-7 (sra-7) from Caenorhabditis elegans.